We begin with the raw amino-acid sequence, 301 residues long: Glycine--tRNA ligase alpha subunit (301 aa).

It belongs to the class-II aminoacyl-tRNA synthetase family. Tetramer of two alpha and two beta subunits.

The protein localises to the cytoplasm. It carries out the reaction tRNA(Gly) + glycine + ATP = glycyl-tRNA(Gly) + AMP + diphosphate. This chain is Glycine--tRNA ligase alpha subunit, found in Bordetella avium (strain 197N).